We begin with the raw amino-acid sequence, 362 residues long: Molybdenum import ATP-binding protein ModC (362 aa).

Residues 1-236 (MTASGLYLNL…TQSPTAQGED (236 aa)) form the ABC transporter domain. ATP is bound at residue 36 to 43 (GPSGSGKT). The region spanning 297–362 (DSTILNKLAA…AQVKSVAIVG (66 aa)) is the Mop domain.

The protein belongs to the ABC transporter superfamily. Molybdate importer (TC 3.A.1.8) family. The complex is composed of two ATP-binding proteins (ModC), two transmembrane proteins (ModB) and a solute-binding protein (ModA).

The protein resides in the cell inner membrane. The enzyme catalyses molybdate(out) + ATP + H2O = molybdate(in) + ADP + phosphate + H(+). Part of the ABC transporter complex ModABC involved in molybdenum import. Responsible for energy coupling to the transport system. In Saccharophagus degradans (strain 2-40 / ATCC 43961 / DSM 17024), this protein is Molybdenum import ATP-binding protein ModC.